The chain runs to 195 residues: uncharacterized protein (195 aa).

Disordered regions lie at residues 1-51 (MTHN…GPSY) and 160-195 (SYSQ…KSCN). Polar residues predominate over residues 13 to 28 (SYQNQAPQPQYYTRQP). Residues 170 to 189 (YYKKHKHHSHHRPKHVKSSR) are compositionally biased toward basic residues.

This is an uncharacterized protein from Acanthamoeba polyphaga mimivirus (APMV).